A 105-amino-acid polypeptide reads, in one-letter code: uncharacterized protein (105 aa).

This is an uncharacterized protein from Microplitis demolitor (Parasitoid wasp).